Here is an 83-residue protein sequence, read N- to C-terminus: Cytochrome b559 subunit alpha (83 aa).

The chain crosses the membrane as a helical span at residues 21–35 (IIHTITVPMLFLAGW). Histidine 23 is a binding site for heme.

This sequence belongs to the PsbE/PsbF family. In terms of assembly, heterodimer of an alpha subunit and a beta subunit. PSII is composed of 1 copy each of membrane proteins PsbA, PsbB, PsbC, PsbD, PsbE, PsbF, PsbH, PsbI, PsbJ, PsbK, PsbL, PsbM, PsbT, PsbX, PsbY, PsbZ, Psb30/Ycf12, peripheral proteins PsbO, CyanoQ (PsbQ), PsbU, PsbV and a large number of cofactors. It forms dimeric complexes. Requires heme b as cofactor.

It localises to the cellular thylakoid membrane. In terms of biological role, this b-type cytochrome is tightly associated with the reaction center of photosystem II (PSII). PSII is a light-driven water:plastoquinone oxidoreductase that uses light energy to abstract electrons from H(2)O, generating O(2) and a proton gradient subsequently used for ATP formation. It consists of a core antenna complex that captures photons, and an electron transfer chain that converts photonic excitation into a charge separation. This Acaryochloris marina (strain MBIC 11017) protein is Cytochrome b559 subunit alpha.